Here is a 235-residue protein sequence, read N- to C-terminus: Peptidase E (235 aa).

Catalysis depends on charge relay system residues Ser122, Asp137, and His159.

This sequence belongs to the peptidase S51 family.

It localises to the cytoplasm. The enzyme catalyses Dipeptidase E catalyzes the hydrolysis of dipeptides Asp-|-Xaa. It does not act on peptides with N-terminal Glu, Asn or Gln, nor does it cleave isoaspartyl peptides.. Hydrolyzes dipeptides containing N-terminal aspartate residues. May play a role in allowing the cell to use peptide aspartate to spare carbon otherwise required for the synthesis of the aspartate family of amino acids. The sequence is that of Peptidase E from Shewanella amazonensis (strain ATCC BAA-1098 / SB2B).